The sequence spans 497 residues: Glycerol kinase (497 aa).

Position 12 (Thr-12) interacts with ADP. ATP is bound by residues Thr-12, Thr-13, and Ser-14. Thr-12 provides a ligand contact to sn-glycerol 3-phosphate. Position 16 (Arg-16) interacts with ADP. Sn-glycerol 3-phosphate is bound by residues Arg-82, Glu-83, Tyr-134, and Asp-243. Positions 82, 83, 134, 243, and 244 each coordinate glycerol. ADP-binding residues include Thr-265 and Gly-308. Thr-265, Gly-308, Gln-312, and Gly-411 together coordinate ATP. Gly-411 is a binding site for ADP.

This sequence belongs to the FGGY kinase family.

It catalyses the reaction glycerol + ATP = sn-glycerol 3-phosphate + ADP + H(+). It participates in polyol metabolism; glycerol degradation via glycerol kinase pathway; sn-glycerol 3-phosphate from glycerol: step 1/1. Its activity is regulated as follows. Inhibited by fructose 1,6-bisphosphate (FBP). Its function is as follows. Key enzyme in the regulation of glycerol uptake and metabolism. Catalyzes the phosphorylation of glycerol to yield sn-glycerol 3-phosphate. The protein is Glycerol kinase of Xanthobacter autotrophicus (strain ATCC BAA-1158 / Py2).